We begin with the raw amino-acid sequence, 64 residues long: AKACTPLLHDCSHDRHSCCRGDMFKYVCDCFYPEGEDKTEVCSCQQPKSHKIAEKIIDKAKTTL.

The segment at 1 to 44 is knottin domain; sequence AKACTPLLHDCSHDRHSCCRGDMFKYVCDCFYPEGEDKTEVCSC. Intrachain disulfides connect Cys-4-Cys-19, Cys-11-Cys-28, Cys-18-Cys-44, and Cys-30-Cys-42. Residues 45–64 form a linear cationic cytotoxin domain region; that stretch reads QQPKSHKIAEKIIDKAKTTL. Leucine amide is present on Leu-64.

This sequence belongs to the neurotoxin 19 (CSTX) family. 05 (U4-Lctx) subfamily. Post-translationally, amidation at Leu-64 is not mandatory for activity on P2RX3. Expressed by the venom gland.

It localises to the secreted. Its function is as follows. Enhances the high-affinity desensitization of human P2RX3 purinoceptors. At 50 nM, the toxin decreases the IC(50) for ambient ATP from 2.67 nM to 0.77 nM in human P2RX3. This is Purotoxin-2 from Alopecosa marikovskyi (Wolf spider).